The following is a 366-amino-acid chain: Reticulon-4-interacting protein 1, mitochondrial (366 aa).

A mitochondrion-targeting transit peptide spans 1-20 (MIEKMILRRFFSTKSSTMRA).

This sequence belongs to the zinc-containing alcohol dehydrogenase family. Quinone oxidoreductase subfamily. Expressed in pharynx, muscles and intestine.

Its subcellular location is the mitochondrion. Plays a role in oxygen metabolism in the mitochondria by regulating the levels of reactive oxygen species (ROS) thereby conferring resistance to oxidative stress. Involved in resistance to P.aeruginosa PA14 infection. Regulates lifespan. This Caenorhabditis elegans protein is Reticulon-4-interacting protein 1, mitochondrial.